Consider the following 155-residue polypeptide: MDCSFITTNDLRRMFKTLDKNQDGLVTLDELLWILDKLGWAEHTPDELELIVGKQSLDLDEFLRFYYDAVLDSKGSKKNIDVVADNDEAIARAFNVFDVNGDGYISAEELRDVLERLGFEEEAKAWDCGRMIRVHDKNLDGFVDFEEFKNMILHV.

EF-hand domains lie at 6–41 (ITTN…LGWA), 85–120 (DNDE…LGFE), and 130–155 (RMIR…ILHV). 9 residues coordinate Ca(2+): Asp-19, Asn-21, Asp-23, Glu-30, Asp-98, Asn-100, Asp-102, Tyr-104, and Glu-109.

Its function is as follows. Potential calcium sensor. The protein is Probable calcium-binding protein CML44 (CML44) of Arabidopsis thaliana (Mouse-ear cress).